The chain runs to 227 residues: MKFAVCVFPGSNCDYDTYYVIRDILEKDVEFVYWEEKNLSKYDVVVLPGGFSFGDYLRPGALAARTPLAQAIYDFAQKGKYVIGICNGFQILTELGLLPGALLPNLNMRFVCKWVNLRVENERSAFTRKLEKGDVLRIPIAHHDGRYYVPEEELRKMEENGQILFRYCDEQGEVKEEVNPNGSVSNIAGVMNKEGNVFGMMPHPERASEDILGSHDGLMLWYSLLSD.

A Glutamine amidotransferase type-1 domain is found at 3–227; that stretch reads FAVCVFPGSN…LMLWYSLLSD (225 aa). C86 serves as the catalytic Nucleophile. Catalysis depends on residues H203 and E205.

In terms of assembly, part of the FGAM synthase complex composed of 1 PurL, 1 PurQ and 2 PurS subunits.

The protein resides in the cytoplasm. It carries out the reaction N(2)-formyl-N(1)-(5-phospho-beta-D-ribosyl)glycinamide + L-glutamine + ATP + H2O = 2-formamido-N(1)-(5-O-phospho-beta-D-ribosyl)acetamidine + L-glutamate + ADP + phosphate + H(+). The catalysed reaction is L-glutamine + H2O = L-glutamate + NH4(+). The protein operates within purine metabolism; IMP biosynthesis via de novo pathway; 5-amino-1-(5-phospho-D-ribosyl)imidazole from N(2)-formyl-N(1)-(5-phospho-D-ribosyl)glycinamide: step 1/2. Its function is as follows. Part of the phosphoribosylformylglycinamidine synthase complex involved in the purines biosynthetic pathway. Catalyzes the ATP-dependent conversion of formylglycinamide ribonucleotide (FGAR) and glutamine to yield formylglycinamidine ribonucleotide (FGAM) and glutamate. The FGAM synthase complex is composed of three subunits. PurQ produces an ammonia molecule by converting glutamine to glutamate. PurL transfers the ammonia molecule to FGAR to form FGAM in an ATP-dependent manner. PurS interacts with PurQ and PurL and is thought to assist in the transfer of the ammonia molecule from PurQ to PurL. This is Phosphoribosylformylglycinamidine synthase subunit PurQ from Aquifex aeolicus (strain VF5).